The sequence spans 321 residues: tRNA U34 carboxymethyltransferase (321 aa).

Residues K90, W104, K109, G129, 151-153, 180-181, M195, Y199, and R314 each bind carboxy-S-adenosyl-L-methionine; these read DPT and IE.

It belongs to the class I-like SAM-binding methyltransferase superfamily. CmoB family. In terms of assembly, homotetramer.

It carries out the reaction carboxy-S-adenosyl-L-methionine + 5-hydroxyuridine(34) in tRNA = 5-carboxymethoxyuridine(34) in tRNA + S-adenosyl-L-homocysteine + H(+). In terms of biological role, catalyzes carboxymethyl transfer from carboxy-S-adenosyl-L-methionine (Cx-SAM) to 5-hydroxyuridine (ho5U) to form 5-carboxymethoxyuridine (cmo5U) at position 34 in tRNAs. In Haemophilus influenzae (strain PittGG), this protein is tRNA U34 carboxymethyltransferase.